Reading from the N-terminus, the 336-residue chain is Holliday junction branch migration complex subunit RuvB (336 aa).

A compositionally biased stretch (basic and acidic residues) spans 1-11; sequence MDDDKLLSGDK. Residues 1 to 21 are disordered; sequence MDDDKLLSGDKADDEEASLEK. The segment at 1–184 is large ATPase domain (RuvB-L); sequence MDDDKLLSGD…FGIVEHMAYY (184 aa). ATP-binding positions include L23, R24, G65, K68, T69, T70, 131-133, R174, Y184, and R221; that span reads EDF. Position 69 (T69) interacts with Mg(2+). The segment at 185–255 is small ATPAse domain (RuvB-S); that stretch reads EVADLEDIVK…IVARSLTYLR (71 aa). Residues 258 to 336 form a head domain (RuvB-H) region; sequence DAGLDETDNK…HLGFPYPENK (79 aa). DNA-binding residues include R313 and R318.

This sequence belongs to the RuvB family. In terms of assembly, homohexamer. Forms an RuvA(8)-RuvB(12)-Holliday junction (HJ) complex. HJ DNA is sandwiched between 2 RuvA tetramers; dsDNA enters through RuvA and exits via RuvB. An RuvB hexamer assembles on each DNA strand where it exits the tetramer. Each RuvB hexamer is contacted by two RuvA subunits (via domain III) on 2 adjacent RuvB subunits; this complex drives branch migration. In the full resolvosome a probable DNA-RuvA(4)-RuvB(12)-RuvC(2) complex forms which resolves the HJ.

The protein resides in the cytoplasm. It carries out the reaction ATP + H2O = ADP + phosphate + H(+). Functionally, the RuvA-RuvB-RuvC complex processes Holliday junction (HJ) DNA during genetic recombination and DNA repair, while the RuvA-RuvB complex plays an important role in the rescue of blocked DNA replication forks via replication fork reversal (RFR). RuvA specifically binds to HJ cruciform DNA, conferring on it an open structure. The RuvB hexamer acts as an ATP-dependent pump, pulling dsDNA into and through the RuvAB complex. RuvB forms 2 homohexamers on either side of HJ DNA bound by 1 or 2 RuvA tetramers; 4 subunits per hexamer contact DNA at a time. Coordinated motions by a converter formed by DNA-disengaged RuvB subunits stimulates ATP hydrolysis and nucleotide exchange. Immobilization of the converter enables RuvB to convert the ATP-contained energy into a lever motion, pulling 2 nucleotides of DNA out of the RuvA tetramer per ATP hydrolyzed, thus driving DNA branch migration. The RuvB motors rotate together with the DNA substrate, which together with the progressing nucleotide cycle form the mechanistic basis for DNA recombination by continuous HJ branch migration. Branch migration allows RuvC to scan DNA until it finds its consensus sequence, where it cleaves and resolves cruciform DNA. The chain is Holliday junction branch migration complex subunit RuvB from Lactiplantibacillus plantarum (strain ATCC BAA-793 / NCIMB 8826 / WCFS1) (Lactobacillus plantarum).